The sequence spans 566 residues: Alpha-keto-acid decarboxylase (566 aa).

Glu-61 is a binding site for thiamine diphosphate. The segment at 396 to 478 (TSFYGMADHR…VVVNNDGYTV (83 aa)) is thiamine pyrophosphate binding. Mg(2+) contacts are provided by Asp-446, Asn-473, and Gly-475.

This sequence belongs to the TPP enzyme family. The cofactor is a metal cation. It depends on thiamine diphosphate as a cofactor.

Functionally, decarboxylates branched-chain and aromatic alpha-keto acids to aldehydes. In Mycobacterium ulcerans (strain Agy99), this protein is Alpha-keto-acid decarboxylase (kdc).